Reading from the N-terminus, the 364-residue chain is Fructose-1,6-bisphosphatase class 1 2 (364 aa).

4 residues coordinate Mg(2+): Glu99, Asp121, Leu123, and Asp124. Residues 124-127 and Asn220 contribute to the substrate site; that span reads DGSS. Glu292 contacts Mg(2+).

This sequence belongs to the FBPase class 1 family. In terms of assembly, homotetramer. Mg(2+) is required as a cofactor.

The protein resides in the cytoplasm. It carries out the reaction beta-D-fructose 1,6-bisphosphate + H2O = beta-D-fructose 6-phosphate + phosphate. The protein operates within carbohydrate biosynthesis; gluconeogenesis. The polypeptide is Fructose-1,6-bisphosphatase class 1 2 (Polaromonas naphthalenivorans (strain CJ2)).